The following is a 426-amino-acid chain: Serine--tRNA ligase (426 aa).

233-235 (TAE) serves as a coordination point for L-serine. 264–266 (RSE) provides a ligand contact to ATP. E287 provides a ligand contact to L-serine. Residue 351 to 354 (EISS) participates in ATP binding. S387 contributes to the L-serine binding site.

The protein belongs to the class-II aminoacyl-tRNA synthetase family. Type-1 seryl-tRNA synthetase subfamily. In terms of assembly, homodimer. The tRNA molecule binds across the dimer.

It localises to the cytoplasm. It carries out the reaction tRNA(Ser) + L-serine + ATP = L-seryl-tRNA(Ser) + AMP + diphosphate + H(+). It catalyses the reaction tRNA(Sec) + L-serine + ATP = L-seryl-tRNA(Sec) + AMP + diphosphate + H(+). It functions in the pathway aminoacyl-tRNA biosynthesis; selenocysteinyl-tRNA(Sec) biosynthesis; L-seryl-tRNA(Sec) from L-serine and tRNA(Sec): step 1/1. Catalyzes the attachment of serine to tRNA(Ser). Is also able to aminoacylate tRNA(Sec) with serine, to form the misacylated tRNA L-seryl-tRNA(Sec), which will be further converted into selenocysteinyl-tRNA(Sec). This is Serine--tRNA ligase from Pseudomonas syringae pv. syringae (strain B728a).